The chain runs to 363 residues: Beta-1,3-N-acetylglucosaminyltransferase lunatic fringe (363 aa).

The Cytoplasmic segment spans residues 1-8 (MLKSCGRK). Residues 9 to 29 (LLLSLVGSMFTCLLVLMVEPP) form a helical; Signal-anchor for type II membrane protein membrane-spanning segment. Topologically, residues 30-363 (GRPGLARGEA…TPWCPSNVVY (334 aa)) are lumenal. Position 113 (Arg-113) interacts with substrate. N-linked (GlcNAc...) asparagine glycosylation is present at Asn-151. 2 cysteine pairs are disulfide-bonded: Cys-152-Cys-163 and Cys-181-Cys-244. Asp-185 is a binding site for substrate. Asp-186 provides a ligand contact to Mn(2+). Residue Asp-274 is part of the active site. His-298 provides a ligand contact to Mn(2+). A disulfide bridge connects residues Cys-348 and Cys-357.

Belongs to the glycosyltransferase 31 family. Mn(2+) is required as a cofactor. Requires Co(2+) as cofactor. A soluble form may be derived from the membrane form by proteolytic processing.

It localises to the golgi apparatus membrane. It carries out the reaction 3-O-(alpha-L-fucosyl)-L-threonyl-[EGF-like domain protein] + UDP-N-acetyl-alpha-D-glucosamine = 3-O-(N-acetyl-beta-D-glucosaminyl-(1-&gt;3)-alpha-L-fucosyl)-L-threonyl-[EGF-like domain protein] + UDP + H(+). The enzyme catalyses 3-O-(alpha-L-fucosyl)-L-seryl-[EGF-like domain protein] + UDP-N-acetyl-alpha-D-glucosamine = 3-O-(N-acetyl-beta-D-glucosaminyl-(1-&gt;3)-alpha-L-fucosyl)-L-seryl-[EGF-like domain protein] + UDP + H(+). In terms of biological role, glycosyltransferase that initiates the elongation of O-linked fucose residues attached to EGF-like repeats in the extracellular domain of Notch molecules. Essential mediator of somite segmentation and patterning. This chain is Beta-1,3-N-acetylglucosaminyltransferase lunatic fringe (LFNG), found in Gallus gallus (Chicken).